The sequence spans 913 residues: Protein translocase subunit SecA (913 aa).

ATP contacts are provided by residues Gln87, 105-109, and Asp512; that span reads GEGKT. The Zn(2+) site is built by Cys897, Cys899, Cys908, and His909.

Belongs to the SecA family. As to quaternary structure, monomer and homodimer. Part of the essential Sec protein translocation apparatus which comprises SecA, SecYEG and auxiliary proteins SecDF-YajC and YidC. The cofactor is Zn(2+).

The protein localises to the cell inner membrane. Its subcellular location is the cytoplasm. The enzyme catalyses ATP + H2O + cellular proteinSide 1 = ADP + phosphate + cellular proteinSide 2.. Part of the Sec protein translocase complex. Interacts with the SecYEG preprotein conducting channel. Has a central role in coupling the hydrolysis of ATP to the transfer of proteins into and across the cell membrane, serving both as a receptor for the preprotein-SecB complex and as an ATP-driven molecular motor driving the stepwise translocation of polypeptide chains across the membrane. This is Protein translocase subunit SecA from Pseudomonas fluorescens (strain ATCC BAA-477 / NRRL B-23932 / Pf-5).